Here is a 512-residue protein sequence, read N- to C-terminus: Cytochrome P450 84A4 (512 aa).

The helical transmembrane segment at 7–24 (LIVLVPLLLFLFPHLLLR) threads the bilayer. Position 447 (C447) interacts with heme.

This sequence belongs to the cytochrome P450 family. Requires heme as cofactor. Expressed in seedlings, roots, stems and inflorescence nodes. Low or no expression in leaves, flowers, seeds and lignifying tissue.

It localises to the membrane. Its function is as follows. Cytochrome P450 involved in the production of catechol-substituted substrates needed for the arabidopyrones biosynthesis. Converts p-coumaraldehyde into caffealdehyde. In Arabidopsis thaliana (Mouse-ear cress), this protein is Cytochrome P450 84A4 (CYP84A4).